The sequence spans 79 residues: uncharacterized protein (79 aa).

The next 2 helical transmembrane spans lie at isoleucine 18–isoleucine 38 and glycine 50–phenylalanine 70.

It localises to the host membrane. This is an uncharacterized protein from Spiroplasma virus SpV1-R8A2 B (SpV1).